Consider the following 782-residue polypeptide: Beta-mannosyltransferase 9 (782 aa).

The Cytoplasmic segment spans residues 1-26 (MEKLIQSTISLFISLSLKISTKSYKS). A helical transmembrane segment spans residues 27-47 (IISILFIISLLSIILTTTITV). Over 48–782 (YHDPERIITT…GKDKGKDKSN (735 aa)) the chain is Extracellular. The tract at residues 66–96 (KSVFTASSPKQQDKLQQEIDQHQSDNSHEQQ) is disordered. The segment covering 76 to 96 (QQDKLQQEIDQHQSDNSHEQQ) has biased composition (basic and acidic residues). N445, N648, and N699 each carry an N-linked (GlcNAc...) asparagine glycan.

Belongs to the BMT family.

It is found in the membrane. Its function is as follows. Beta-mannosyltransferase involved in cell wall biosynthesis through beta-1,2-mannosylation of cell wall phosphopeptidomannan. This Candida albicans (strain SC5314 / ATCC MYA-2876) (Yeast) protein is Beta-mannosyltransferase 9 (BMT9).